The primary structure comprises 1335 residues: RNA replication protein (1335 aa).

Residues 58-225 form the Alphavirus-like MT domain; the sequence is NPYSLKLHPH…EHRYKDLNWL (168 aa). The disordered stretch occupies residues 428 to 492; that stretch reads GVSSEPTYTE…EEEPQRDDLP (65 aa). The segment covering 453–466 has biased composition (low complexity); the sequence is AAEPSATSDEPESS. The (+)RNA virus helicase ATP-binding domain occupies 564–729; it reads DVMAGKTGAI…VFGKFSRYHI (166 aa). 603-610 lines the ATP pocket; that stretch reads GAGGSGKS. In terms of domain architecture, (+)RNA virus helicase C-terminal spans 730-863; sequence NATHRNPRNL…LNKEIKVTEG (134 aa). In terms of domain architecture, RdRp catalytic spans 1102 to 1209; the sequence is LPAYTNDFTA…NCRPVERQSF (108 aa).

The protein belongs to the potexviruses/carlaviruses RNA replication protein family.

The catalysed reaction is RNA(n) + a ribonucleoside 5'-triphosphate = RNA(n+1) + diphosphate. The enzyme catalyses ATP + H2O = ADP + phosphate + H(+). Its function is as follows. RNA replication. The central part of this protein possibly functions as an ATP-binding helicase. The chain is RNA replication protein from Foxtail mosaic virus.